Consider the following 176-residue polypeptide: Small ribosomal subunit protein uS5 (176 aa).

Residues 11 to 74 (LSEVLVDVNR…QAAKKRMMKV (64 aa)) enclose the S5 DRBM domain.

Belongs to the universal ribosomal protein uS5 family. Part of the 30S ribosomal subunit. Contacts proteins S4 and S8.

In terms of biological role, with S4 and S12 plays an important role in translational accuracy. Located at the back of the 30S subunit body where it stabilizes the conformation of the head with respect to the body. The polypeptide is Small ribosomal subunit protein uS5 (Rickettsia akari (strain Hartford)).